The primary structure comprises 163 residues: Peptide deformylase 3 (163 aa).

Fe cation is bound by residues Cys-91 and His-133. Residue Glu-134 is part of the active site. Residue His-137 coordinates Fe cation.

It belongs to the polypeptide deformylase family. Requires Fe(2+) as cofactor.

It carries out the reaction N-terminal N-formyl-L-methionyl-[peptide] + H2O = N-terminal L-methionyl-[peptide] + formate. Removes the formyl group from the N-terminal Met of newly synthesized proteins. Requires at least a dipeptide for an efficient rate of reaction. N-terminal L-methionine is a prerequisite for activity but the enzyme has broad specificity at other positions. This Shewanella oneidensis (strain ATCC 700550 / JCM 31522 / CIP 106686 / LMG 19005 / NCIMB 14063 / MR-1) protein is Peptide deformylase 3.